We begin with the raw amino-acid sequence, 238 residues long: Keratin-associated protein 5-3 (238 aa).

11 repeat units span residues 35–38 (CCVP), 41–44 (CCKP), 47–50 (CCVP), 91–94 (CCVP), 150–153 (CCKP), 160–163 (CCKP), 170–173 (CCKP), 189–192 (CCKP), 199–202 (CCKP), 218–221 (CCKP), and 228–231 (CCVP). The 11 X 4 AA repeats of C-C-X-P stretch occupies residues 35 to 231 (CCVPVCCCKP…CSSQSSCCVP (197 aa)).

Belongs to the KRTAP type 5 family. As to quaternary structure, interacts with hair keratins. Restricted to hair root, not detected in any other tissues.

Its function is as follows. In the hair cortex, hair keratin intermediate filaments are embedded in an interfilamentous matrix, consisting of hair keratin-associated protein (KRTAP), which are essential for the formation of a rigid and resistant hair shaft through their extensive disulfide bond cross-linking with abundant cysteine residues of hair keratins. The matrix proteins include the high-sulfur and high-glycine-tyrosine keratins. The polypeptide is Keratin-associated protein 5-3 (KRTAP5-3) (Homo sapiens (Human)).